We begin with the raw amino-acid sequence, 260 residues long: 2-amino-3,7-dideoxy-D-threo-hept-6-ulosonate synthase 1 (260 aa).

Aspartate 26 (proton acceptor) is an active-site residue. Residues 26 to 30 (DHGIT) and 144 to 146 (YPR) contribute to the 1-deoxy-D-threo-hexo-2,5-diulose 6-phosphate site. Tyrosine 144 serves as the catalytic Proton donor. The Schiff-base intermediate with substrate role is filled by lysine 172. Residues 194–195 (GG) and 221–222 (GR) each bind 1-deoxy-D-threo-hexo-2,5-diulose 6-phosphate.

Belongs to the DeoC/FbaB aldolase family. ADHS subfamily. As to quaternary structure, homodecamer.

The enzyme catalyses 1-deoxy-D-threo-hexo-2,5-diulose 6-phosphate + L-aspartate 4-semialdehyde = 2,3-dioxopropyl phosphate + 2-amino-2,3,7-trideoxy-D-lyxo-hept-6-ulosonate. Catalyzes a transaldol reaction between 6-deoxy-5-ketofructose 1-phosphate (DKFP) and L-aspartate semialdehyde (ASA) with an elimination of hydroxypyruvaldehyde phosphate to yield 2-amino-3,7-dideoxy-D-threo-hept-6-ulosonate (ADH). Plays a key role in an alternative pathway of the biosynthesis of 3-dehydroquinate (DHQ), which is involved in the canonical pathway for the biosynthesis of aromatic amino acids. The chain is 2-amino-3,7-dideoxy-D-threo-hept-6-ulosonate synthase 1 from Archaeoglobus fulgidus (strain ATCC 49558 / DSM 4304 / JCM 9628 / NBRC 100126 / VC-16).